The chain runs to 962 residues: Translation initiation factor IF-2 (962 aa).

Residues 99-365 are disordered; the sequence is VKAAQTQAAP…GKKGKKLKLE (267 aa). The segment covering 117-141 has biased composition (basic and acidic residues); it reads DAAKARAEAAARAEARAKAEAEAAK. Positions 145–155 are enriched in low complexity; sequence AKAGNKAKPAA. The segment covering 173-216 has biased composition (basic and acidic residues); sequence KPAEESKAEKAQADKMPSKKPAEPKEKAAKPKHERNGKGKDAKK. A compositionally biased stretch (low complexity) spans 219–234; the sequence is KPAAPAVPQPVVSAEE. Over residues 235 to 269 the composition is skewed to basic and acidic residues; the sequence is QAQRDEEARRAAALRAHQEALLKEKQERQARREAM. The segment covering 270 to 283 has biased composition (low complexity); that stretch reads KQQAEQQAKAAQEA. The span at 338–354 shows a compositional bias: basic and acidic residues; sequence GGRDRNNARNGDDERVR. The 170-residue stretch at 462–631 folds into the tr-type G domain; it reads PRPPVVTVMG…LLEAEVLELT (170 aa). The G1 stretch occupies residues 471–478; it reads GHVDHGKT. 471-478 serves as a coordination point for GTP; it reads GHVDHGKT. The interval 496-500 is G2; that stretch reads GITQH. A G3 region spans residues 517–520; it reads DTPG. GTP-binding positions include 517–521 and 571–574; these read DTPGH and NKID. Positions 571-574 are G4; sequence NKID. The tract at residues 607 to 609 is G5; sequence SAK.

It belongs to the TRAFAC class translation factor GTPase superfamily. Classic translation factor GTPase family. IF-2 subfamily.

The protein localises to the cytoplasm. Functionally, one of the essential components for the initiation of protein synthesis. Protects formylmethionyl-tRNA from spontaneous hydrolysis and promotes its binding to the 30S ribosomal subunits. Also involved in the hydrolysis of GTP during the formation of the 70S ribosomal complex. This is Translation initiation factor IF-2 from Neisseria meningitidis serogroup C (strain 053442).